Consider the following 307-residue polypeptide: MSEEFPSPQLIDDLEEHPQHDNARVVKDLLAGTAGGIAQVLVGQPFDTTKVRLQTSSTPTTAMEVVRKLLANEGPRGFYKGTLTPLIGVGACVSLQFGVNEAMKRFFHHRNADMSSTLSLPQYYACGVTGGIVNSFLASPIEHVRIRLQTQTGSGTNAEFKGPLECIKKLRHNKALLRGLTPTILREGHGCGTYFLVYEALIANQMNKRRGLERKDIPAWKLCIFGALSGTALWLMVYPLDVIKSVMQTDNLQKPKFGNSISSVAKTLYANGGIGAFFKGFGPTMLRAAPANGATFATFELAMRLLG.

Solcar repeat units lie at residues 26–106 (VKDL…MKRF), 121–204 (PQYY…LIAN), and 218–305 (PAWK…AMRL). A run of 6 helical transmembrane segments spans residues 29–49 (LLAG…FDTT), 83–103 (LTPL…NEAM), 118–138 (LSLP…SFLA), 183–203 (TILR…ALIA), 223–243 (CIFG…LDVI), and 277–298 (FFKG…TFAT).

The protein belongs to the mitochondrial carrier (TC 2.A.29) family.

The protein localises to the mitochondrion inner membrane. Functionally, secondary mitochondrial glycine transporter required for the biosynthesis of heme at high glycine concentrations. Imports the precursor glycine into the mitochondrial matrix, where it is condensed with succinyl-CoA to produce 5-aminolevulinate (ALA), the first step of heme biosynthesis. The protein is Mitochondrial glycine transporter YMC1 of Saccharomyces cerevisiae (strain ATCC 204508 / S288c) (Baker's yeast).